Reading from the N-terminus, the 460-residue chain is Orexin receptor type 2 (460 aa).

Over 1-54 (MSSTKLEDSLSRRNWSSASELNETQEPFLNPTDYDDEEFLRYLWREYLHPKEYE) the chain is Extracellular. N-linked (GlcNAc...) asparagine glycans are attached at residues N14 and N22. Residues 33–49 (DYDDEEFLRYLWREYLH) form a required for response to orexin-A region. Residues 55–75 (WVLIAGYIIVFVVALIGNVLV) form a helical membrane-spanning segment. Over 76-88 (CVAVWKNHHMRTV) the chain is Cytoplasmic. Residues 89-110 (TNYFIVNLSLADVLVTITCLPA) form a helical membrane-spanning segment. Over 111–127 (TLVVDITETWFFGQSLC) the chain is Extracellular. A disulfide bond links C127 and C210. The helical transmembrane segment at 128 to 150 (KVIPYLQTVSVSVSVLTLSCIAL) threads the bilayer. The Cytoplasmic portion of the chain corresponds to 151–170 (DRWYAICHPLMFKSTAKRAR). A helical membrane pass occupies residues 171–191 (NSIVVIWIVSCIIMIPQAIVM). The Extracellular portion of the chain corresponds to 192 to 222 (ECSSMLPGLANKTTLFTVCDEHWGGEVYPKM). An N-linked (GlcNAc...) asparagine glycan is attached at N202. A helical transmembrane segment spans residues 223–243 (YHICFFLVTYMAPLCLMILAY). Over 244–304 (LQIFRKLWCR…QIRARRKTAR (61 aa)) the chain is Cytoplasmic. A helical transmembrane segment spans residues 305 to 326 (MLMVVLLVFAICYLPISILNVL). Over 327–342 (KRVFGMFTHTEDRETV) the chain is Extracellular. Residues 343–366 (YAWFTFSHWLVYANSAANPIIYNF) form a helical membrane-spanning segment. Residues 367-460 (LSGKFREEFK…SSLLSTWLEV (94 aa)) lie on the Cytoplasmic side of the membrane.

This sequence belongs to the G-protein coupled receptor 1 family. Widely expressed. Isoform 2 not detected in skeletal muscle and kidney.

The protein localises to the cell membrane. Its function is as follows. Nonselective, high-affinity receptor for both orexin-A and orexin-B neuropeptides. Triggers an increase in cytoplasmic Ca(2+) levels in response to orexin-A binding. The sequence is that of Orexin receptor type 2 (Hcrtr2) from Mus musculus (Mouse).